The chain runs to 330 residues: T-cell surface glycoprotein CD1b4 (330 aa).

An N-terminal signal peptide occupies residues 1–15 (MLLLALAFFFPAGDT). Over 16 to 299 (QNVLPGKISF…LYWGHSISIG (284 aa)) the chain is Extracellular. Asn-35, Asn-72, and Asn-143 each carry an N-linked (GlcNAc...) asparagine glycan. 2 cysteine pairs are disulfide-bonded: Cys-117–Cys-181 and Cys-221–Cys-276. The 111-residue stretch at 182-292 (PRYLMSVIEA…LEGQDIILYW (111 aa)) folds into the Ig-like domain. Residues 300-320 (WIILAVLVPCLIVLVLFILWF) form a helical membrane-spanning segment. Over 321 to 330 (YRRWSYEDIF) the chain is Cytoplasmic. An Internalization signal motif is present at residues 326 to 329 (YEDI).

In terms of assembly, heterodimer with B2M (beta-2-microglobulin). Interacts with saposin C.

It localises to the cell membrane. The protein resides in the endosome membrane. Its subcellular location is the lysosome membrane. Its function is as follows. Antigen-presenting protein that binds self and non-self lipid and glycolipid antigens and presents them to T-cell receptors on natural killer T-cells. This Cavia porcellus (Guinea pig) protein is T-cell surface glycoprotein CD1b4 (CD1B4).